The chain runs to 181 residues: MSSLLQGVNLYLIGMMGVGKTTVGPLLAKHLGYGFLDLDGVIAKATDKSINQLFAEEGEAGFRQIESDVLSQVCAFTKLTIATGGGIVLRRENWGYLHHGLIVWLDVPVELIYRRLAEDTTRPLLQDADLKGKLRSLLEQRTPLYSQADLHITVQEGETPEDIANRIIEVIPNVLKPQASH.

17–22 (GVGKTT) is a binding site for ATP. Threonine 21 lines the Mg(2+) pocket. Positions 39, 63, and 85 each coordinate substrate. Arginine 122 is an ATP binding site. Arginine 141 is a binding site for substrate.

It belongs to the shikimate kinase family. As to quaternary structure, monomer. The cofactor is Mg(2+).

It is found in the cytoplasm. It catalyses the reaction shikimate + ATP = 3-phosphoshikimate + ADP + H(+). Its pathway is metabolic intermediate biosynthesis; chorismate biosynthesis; chorismate from D-erythrose 4-phosphate and phosphoenolpyruvate: step 5/7. Functionally, catalyzes the specific phosphorylation of the 3-hydroxyl group of shikimic acid using ATP as a cosubstrate. This is Shikimate kinase from Nostoc punctiforme (strain ATCC 29133 / PCC 73102).